The sequence spans 255 residues: MKLRIFSIMASLILLLTACTSIRTSSEGKQKAHETKTKEHIVIAAVGDSLTEGVGDPDGKGYVGKVADSIRSDKQVKTVDVKNYAVKGNRSDDLLEKLKDKKVQKGIKDADYVFFTIGGNDLMKILRQNFLQLTVEPFQEAEKPYEKRFEKIISEIRELNDHAELIYVSMYNPFTFTLSELNEINGVVTDWNHIAEKELKKDKHAKIVHIEDLFNQKSDSSRISEEDDFHPNGTGYSLIAKRVYQAIKKEGLPKE.

This is an uncharacterized protein from Bacillus subtilis (strain 168).